A 294-amino-acid polypeptide reads, in one-letter code: Bifunctional protein FolD (294 aa).

NADP(+) contacts are provided by residues 166-168 (GRS), serine 195, and isoleucine 236.

This sequence belongs to the tetrahydrofolate dehydrogenase/cyclohydrolase family. Homodimer.

The catalysed reaction is (6R)-5,10-methylene-5,6,7,8-tetrahydrofolate + NADP(+) = (6R)-5,10-methenyltetrahydrofolate + NADPH. It catalyses the reaction (6R)-5,10-methenyltetrahydrofolate + H2O = (6R)-10-formyltetrahydrofolate + H(+). It functions in the pathway one-carbon metabolism; tetrahydrofolate interconversion. Its function is as follows. Catalyzes the oxidation of 5,10-methylenetetrahydrofolate to 5,10-methenyltetrahydrofolate and then the hydrolysis of 5,10-methenyltetrahydrofolate to 10-formyltetrahydrofolate. The polypeptide is Bifunctional protein FolD (Chloroherpeton thalassium (strain ATCC 35110 / GB-78)).